The primary structure comprises 162 residues: Shikimate kinase (162 aa).

10–15 (GAGKST) contacts ATP. Ser-14 lines the Mg(2+) pocket. Residues Asp-28, Arg-52, and Gly-73 each coordinate substrate. Arg-113 contributes to the ATP binding site. Arg-129 is a binding site for substrate.

It belongs to the shikimate kinase family. In terms of assembly, monomer. It depends on Mg(2+) as a cofactor.

It is found in the cytoplasm. It catalyses the reaction shikimate + ATP = 3-phosphoshikimate + ADP + H(+). The protein operates within metabolic intermediate biosynthesis; chorismate biosynthesis; chorismate from D-erythrose 4-phosphate and phosphoenolpyruvate: step 5/7. In terms of biological role, catalyzes the specific phosphorylation of the 3-hydroxyl group of shikimic acid using ATP as a cosubstrate. The protein is Shikimate kinase of Lactococcus lactis subsp. lactis (strain IL1403) (Streptococcus lactis).